We begin with the raw amino-acid sequence, 311 residues long: tRNA pseudouridine synthase B (311 aa).

Catalysis depends on Asp-49, which acts as the Nucleophile.

It belongs to the pseudouridine synthase TruB family. Type 1 subfamily.

The enzyme catalyses uridine(55) in tRNA = pseudouridine(55) in tRNA. Its function is as follows. Responsible for synthesis of pseudouridine from uracil-55 in the psi GC loop of transfer RNAs. The protein is tRNA pseudouridine synthase B of Rhizobium meliloti (strain 1021) (Ensifer meliloti).